Reading from the N-terminus, the 331-residue chain is Aspartate carbamoyltransferase catalytic subunit (331 aa).

Residues arginine 62 and threonine 63 each contribute to the carbamoyl phosphate site. Residue lysine 90 participates in L-aspartate binding. Carbamoyl phosphate contacts are provided by arginine 112, histidine 145, and glutamine 148. Residues arginine 185 and arginine 246 each contribute to the L-aspartate site. Residues glycine 287 and proline 288 each coordinate carbamoyl phosphate.

The protein belongs to the aspartate/ornithine carbamoyltransferase superfamily. ATCase family. As to quaternary structure, heterododecamer (2C3:3R2) of six catalytic PyrB chains organized as two trimers (C3), and six regulatory PyrI chains organized as three dimers (R2).

It catalyses the reaction carbamoyl phosphate + L-aspartate = N-carbamoyl-L-aspartate + phosphate + H(+). It functions in the pathway pyrimidine metabolism; UMP biosynthesis via de novo pathway; (S)-dihydroorotate from bicarbonate: step 2/3. In terms of biological role, catalyzes the condensation of carbamoyl phosphate and aspartate to form carbamoyl aspartate and inorganic phosphate, the committed step in the de novo pyrimidine nucleotide biosynthesis pathway. The chain is Aspartate carbamoyltransferase catalytic subunit from Synechocystis sp. (strain ATCC 27184 / PCC 6803 / Kazusa).